A 297-amino-acid chain; its full sequence is Lymphocyte antigen 6 complex locus protein G6f (297 aa).

Residues 1-16 form the signal peptide; it reads MAVLFLLLFLCGTPQA. The 106-residue stretch at 17-122 folds into the Ig-like V-type domain; that stretch reads ADNMQAIYVA…HNYQNWRVYD (106 aa). At 17 to 235 the chain is on the extracellular side; sequence ADNMQAIYVA…APSTGWDMPW (219 aa). An intrachain disulfide couples C35 to C106. An N-linked (GlcNAc...) asparagine glycan is attached at N88. A helical membrane pass occupies residues 236–256; it reads ILMLLLTMGQGVVILALSIVL. The Cytoplasmic portion of the chain corresponds to 257 to 297; it reads WRQRVRGAPGRDASIPQFKPEIQVYENIHLARLGPPAHKPR. Y281 is modified (phosphotyrosine).

In terms of assembly, homodimer; disulfide-linked. Interacts with GRB2 and GRB7 in a phosphorylation-dependent manner. In terms of processing, N-glycosylated.

The protein resides in the cell membrane. Functionally, may play a role in the downstream signal transduction pathways involving GRB2 and GRB7. The chain is Lymphocyte antigen 6 complex locus protein G6f (LY6G6F) from Homo sapiens (Human).